Consider the following 322-residue polypeptide: tRNA U34 carboxymethyltransferase (322 aa).

Carboxy-S-adenosyl-L-methionine is bound by residues lysine 90, tryptophan 104, lysine 109, glycine 129, 151-153 (DPS), 180-181 (IE), methionine 196, tyrosine 200, and arginine 315.

Belongs to the class I-like SAM-binding methyltransferase superfamily. CmoB family. As to quaternary structure, homotetramer.

The catalysed reaction is carboxy-S-adenosyl-L-methionine + 5-hydroxyuridine(34) in tRNA = 5-carboxymethoxyuridine(34) in tRNA + S-adenosyl-L-homocysteine + H(+). Catalyzes carboxymethyl transfer from carboxy-S-adenosyl-L-methionine (Cx-SAM) to 5-hydroxyuridine (ho5U) to form 5-carboxymethoxyuridine (cmo5U) at position 34 in tRNAs. This chain is tRNA U34 carboxymethyltransferase, found in Cellvibrio japonicus (strain Ueda107) (Pseudomonas fluorescens subsp. cellulosa).